Consider the following 117-residue polypeptide: Large ribosomal subunit protein bL20 (117 aa).

The protein belongs to the bacterial ribosomal protein bL20 family.

Binds directly to 23S ribosomal RNA and is necessary for the in vitro assembly process of the 50S ribosomal subunit. It is not involved in the protein synthesizing functions of that subunit. In Rickettsia prowazekii (strain Madrid E), this protein is Large ribosomal subunit protein bL20 (rplT).